Consider the following 174-residue polypeptide: Crossover junction endodeoxyribonuclease RuvC (174 aa).

Residues Asp8, Glu67, and Asp139 contribute to the active site. Asp8, Glu67, and Asp139 together coordinate Mg(2+).

The protein belongs to the RuvC family. Homodimer which binds Holliday junction (HJ) DNA. The HJ becomes 2-fold symmetrical on binding to RuvC with unstacked arms; it has a different conformation from HJ DNA in complex with RuvA. In the full resolvosome a probable DNA-RuvA(4)-RuvB(12)-RuvC(2) complex forms which resolves the HJ. Mg(2+) serves as cofactor.

Its subcellular location is the cytoplasm. It carries out the reaction Endonucleolytic cleavage at a junction such as a reciprocal single-stranded crossover between two homologous DNA duplexes (Holliday junction).. Functionally, the RuvA-RuvB-RuvC complex processes Holliday junction (HJ) DNA during genetic recombination and DNA repair. Endonuclease that resolves HJ intermediates. Cleaves cruciform DNA by making single-stranded nicks across the HJ at symmetrical positions within the homologous arms, yielding a 5'-phosphate and a 3'-hydroxyl group; requires a central core of homology in the junction. The consensus cleavage sequence is 5'-(A/T)TT(C/G)-3'. Cleavage occurs on the 3'-side of the TT dinucleotide at the point of strand exchange. HJ branch migration catalyzed by RuvA-RuvB allows RuvC to scan DNA until it finds its consensus sequence, where it cleaves and resolves the cruciform DNA. This Pseudomonas syringae pv. syringae (strain B728a) protein is Crossover junction endodeoxyribonuclease RuvC.